The primary structure comprises 366 residues: Tyrosine--tRNA ligase (366 aa).

Residues Tyr-41, Tyr-167, Gln-171, Asp-174, and Gln-189 each contribute to the L-tyrosine site. The 'KMSKS' region signature appears at 241–245 (KMSKS). Lys-244 is an ATP binding site.

This sequence belongs to the class-I aminoacyl-tRNA synthetase family. TyrS type 4 subfamily. As to quaternary structure, homodimer.

It localises to the cytoplasm. It catalyses the reaction tRNA(Tyr) + L-tyrosine + ATP = L-tyrosyl-tRNA(Tyr) + AMP + diphosphate + H(+). In terms of biological role, catalyzes the attachment of tyrosine to tRNA(Tyr) in a two-step reaction: tyrosine is first activated by ATP to form Tyr-AMP and then transferred to the acceptor end of tRNA(Tyr). The protein is Tyrosine--tRNA ligase of Saccharolobus solfataricus (strain ATCC 35092 / DSM 1617 / JCM 11322 / P2) (Sulfolobus solfataricus).